Consider the following 75-residue polypeptide: ATP synthase subunit epsilon, mitochondrial (75 aa).

The transit peptide at 1–9 (MIRRSCALL) directs the protein to the mitochondrion.

This sequence belongs to the eukaryotic ATPase epsilon family. In terms of assembly, F-type ATPases have 2 components, F(1) - the catalytic core - and F(o) - the membrane proton channel. F(1) has five subunits: alpha(3), beta(3), gamma(1), delta(1), epsilon(1), plus the additional subunit P18 (Tb427.05.1710) that is not present in F(1)F(o) ATP synthase from metazoa. Subunit P18 (Tb927.5.1710) interacts with the alpha subunit with a 1:1 stoichiometry; the interaction is direct. Subunit gamma is part of the central stalk. F(o) has three main subunits: a, b and c. The trypanosomal ATPase complex contains additional subunits that are not present in the F(1)F(o) ATP synthase from metazoa.

Its subcellular location is the mitochondrion. It is found in the mitochondrion inner membrane. Its function is as follows. Mitochondrial membrane ATP synthase (F(1)F(o) ATP synthase) produces ATP from ADP in the presence of a proton gradient across the membrane which is generated by electron transport complexes of the respiratory chain. F-type ATPases consist of two structural domains, F(1) - containing the extramembraneous catalytic core, and F(o) - containing the membrane proton channel, linked together by a central stalk and a peripheral stalk. During catalysis, ATP synthesis in the catalytic domain of F(1) is coupled via a rotary mechanism of the central stalk subunits to proton translocation. Subunits alpha and beta form the catalytic core in F(1). Rotation of the central stalk against the surrounding alpha(3)beta(3) subunits leads to hydrolysis of ATP in three separate catalytic sites on the beta subunits. Contrary to the procyclic, insect form that requires F(1)F(o) ATP synthase for ATP synthesis, the bloodstream form relies on ATP hydrolysis by F(1)F(o) ATP synthase to maintain its mitochondrial membrane potential. This is ATP synthase subunit epsilon, mitochondrial from Trypanosoma brucei brucei.